The chain runs to 469 residues: Putative dipeptidase SE_1424 (469 aa).

Residue H84 coordinates Zn(2+). D86 is a catalytic residue. D115 is a binding site for Zn(2+). E149 (proton acceptor) is an active-site residue. Zn(2+) contacts are provided by E150, D173, and H440.

The protein belongs to the peptidase M20A family. It depends on Zn(2+) as a cofactor.

In Staphylococcus epidermidis (strain ATCC 12228 / FDA PCI 1200), this protein is Putative dipeptidase SE_1424.